The primary structure comprises 739 residues: Phosphoribosylformylglycinamidine synthase subunit PurL (739 aa).

The active site involves H53. ATP contacts are provided by Y56 and K95. E97 is a Mg(2+) binding site. Substrate-binding positions include 98 to 101 (SHNH) and R120. The active-site Proton acceptor is the H99. D121 serves as a coordination point for Mg(2+). Substrate is bound at residue Q244. D274 lines the Mg(2+) pocket. 318 to 320 (ESQ) serves as a coordination point for substrate. The ATP site is built by D501 and G538. N539 provides a ligand contact to Mg(2+). S541 serves as a coordination point for substrate.

This sequence belongs to the FGAMS family. In terms of assembly, monomer. Part of the FGAM synthase complex composed of 1 PurL, 1 PurQ and 2 PurS subunits.

The protein localises to the cytoplasm. The enzyme catalyses N(2)-formyl-N(1)-(5-phospho-beta-D-ribosyl)glycinamide + L-glutamine + ATP + H2O = 2-formamido-N(1)-(5-O-phospho-beta-D-ribosyl)acetamidine + L-glutamate + ADP + phosphate + H(+). Its pathway is purine metabolism; IMP biosynthesis via de novo pathway; 5-amino-1-(5-phospho-D-ribosyl)imidazole from N(2)-formyl-N(1)-(5-phospho-D-ribosyl)glycinamide: step 1/2. In terms of biological role, part of the phosphoribosylformylglycinamidine synthase complex involved in the purines biosynthetic pathway. Catalyzes the ATP-dependent conversion of formylglycinamide ribonucleotide (FGAR) and glutamine to yield formylglycinamidine ribonucleotide (FGAM) and glutamate. The FGAM synthase complex is composed of three subunits. PurQ produces an ammonia molecule by converting glutamine to glutamate. PurL transfers the ammonia molecule to FGAR to form FGAM in an ATP-dependent manner. PurS interacts with PurQ and PurL and is thought to assist in the transfer of the ammonia molecule from PurQ to PurL. The protein is Phosphoribosylformylglycinamidine synthase subunit PurL of Listeria monocytogenes serotype 4a (strain HCC23).